We begin with the raw amino-acid sequence, 508 residues long: 2-isopropylmalate synthase (508 aa).

One can recognise a Pyruvate carboxyltransferase domain in the interval 5–267 (IKIFDTTLRD…THRIDTTQIY (263 aa)). 4 residues coordinate Mn(2+): D14, H202, H204, and N238. Residues 390 to 508 (VIDSFQINSG…SEIGESIISQ (119 aa)) are regulatory domain.

Belongs to the alpha-IPM synthase/homocitrate synthase family. LeuA type 1 subfamily. As to quaternary structure, homodimer. The cofactor is Mn(2+).

It localises to the cytoplasm. It catalyses the reaction 3-methyl-2-oxobutanoate + acetyl-CoA + H2O = (2S)-2-isopropylmalate + CoA + H(+). It participates in amino-acid biosynthesis; L-leucine biosynthesis; L-leucine from 3-methyl-2-oxobutanoate: step 1/4. Functionally, catalyzes the condensation of the acetyl group of acetyl-CoA with 3-methyl-2-oxobutanoate (2-ketoisovalerate) to form 3-carboxy-3-hydroxy-4-methylpentanoate (2-isopropylmalate). The sequence is that of 2-isopropylmalate synthase from Ruminiclostridium cellulolyticum (strain ATCC 35319 / DSM 5812 / JCM 6584 / H10) (Clostridium cellulolyticum).